A 496-amino-acid polypeptide reads, in one-letter code: DNA-dependent metalloprotease SPRTN (496 aa).

Position 1 is an N-acetylmethionine (methionine 1). A SprT-like domain is found at 45–212 (LQALFLQFND…KTCGGTYIKI (168 aa)). Histidine 111 provides a ligand contact to Zn(2+). The active site involves glutamate 112. Residues histidine 115 and histidine 130 each coordinate Zn(2+). Lysine 230 carries the post-translational modification N6-acetyllysine. The short motif at 253–261 (FSGKGYVLG) is the SHP-box element. A Phosphoserine modification is found at serine 268. Lysine 303 is covalently cross-linked (Glycyl lysine isopeptide (Lys-Gly) (interchain with G-Cter in SUMO2)). Residues 326-333 (QSVLSSYF) carry the PIP-box motif. Lysine 342 is covalently cross-linked (Glycyl lysine isopeptide (Lys-Gly) (interchain with G-Cter in SUMO2); alternate). Residue lysine 342 forms a Glycyl lysine isopeptide (Lys-Gly) (interchain with G-Cter in ubiquitin); alternate linkage. Residues 346–459 (NVNGSPVKSG…STPRSSGGQR (114 aa)) are disordered. Lysine 361 participates in a covalent cross-link: Glycyl lysine isopeptide (Lys-Gly) (interchain with G-Cter in SUMO2). A compositionally biased stretch (low complexity) spans 382–403 (SSKVTAPASATVTSAAGTSAAI). The residue at position 383 (serine 383) is a Phosphoserine. The Nuclear localization signal motif lies at 412 to 423 (DQFLNKRPRLED). 2 stretches are compositionally biased toward polar residues: residues 426 to 437 (ALNNIKEQTQSG) and 445 to 457 (RPTA…SSGG). A Glycyl lysine isopeptide (Lys-Gly) (interchain with G-Cter in SUMO2) cross-link involves residue lysine 431. Residues 461–488 (LVNCPVCQGVVLESQINEHLDRCLEGSK) form a UBZ4-type zinc finger. Residues cysteine 464, cysteine 467, histidine 479, and cysteine 483 each contribute to the Zn(2+) site.

This sequence belongs to the Spartan family. As to quaternary structure, homodimer. Interacts (VIA PIP-box) with PCNA (when ubiquitinated). Interacts (via its SHP-box) with VCP/p97. Interacts with RAD18. Interacts with KCTD13 and POLD3. The cofactor is Zn(2+). Autocatalytically cleaved in response to double-stranded DNA-binding: autocatalytic cleavage takes place in trans and leads to inactivation. In terms of processing, monoubiquitinated; monoubiquitination promotes exclusion from chromatin. Deubiquitinated by VCPIP1: deubiquitination is required for subsequent acetylation and recruitment to chromatin and DNA damage sites. Post-translationally, acetylated following deubiquitination by VCPIP1, leading to recruitment to chromatin and DNA damage sites. Phosphorylation by CHEK1 promotes recruitment to chromatin.

The protein localises to the nucleus. It is found in the chromosome. With respect to regulation, DNA-binding activates the protease activity: single-stranded DNA-binding specifically activates ability to cleave covalent DNA-protein cross-links (DPCs). In contrast, double-stranded DNA-binding specifically activates autocatalytic cleavage, and subsequent inactivation. DNA-dependent metalloendopeptidase that mediates the proteolytic cleavage of covalent DNA-protein cross-links (DPCs) during DNA synthesis, thereby playing a key role in maintaining genomic integrity. DPCs are highly toxic DNA lesions that interfere with essential chromatin transactions, such as replication and transcription, and which are induced by reactive agents, such as UV light or formaldehyde. Associates with the DNA replication machinery and specifically removes DPCs during DNA synthesis. Catalyzes proteolytic cleavage of the HMCES DNA-protein cross-link following unfolding by the BRIP1/FANCJ helicase. Acts as a pleiotropic protease for DNA-binding proteins cross-linked with DNA, such as TOP1, TOP2A, histones H3 and H4. Mediates degradation of DPCs that are not ubiquitinated, while it is not able to degrade ubiquitinated DPCs. SPRTN activation requires polymerase collision with DPCs followed by helicase bypass of DPCs. Involved in recruitment of VCP/p97 to sites of DNA damage. Also acts as an activator of CHEK1 during normal DNA replication by mediating proteolytic cleavage of CHEK1, thereby promoting CHEK1 removal from chromatin and subsequent activation. Does not activate CHEK1 in response to DNA damage. May also act as a 'reader' of ubiquitinated PCNA: recruited to sites of UV damage and interacts with ubiquitinated PCNA and RAD18, the E3 ubiquitin ligase that monoubiquitinates PCNA. Facilitates chromatin association of RAD18 and is required for efficient PCNA monoubiquitination, promoting a feed-forward loop to enhance PCNA ubiquitination and translesion DNA synthesis. The polypeptide is DNA-dependent metalloprotease SPRTN (Rattus norvegicus (Rat)).